The sequence spans 109 residues: MARDIGLNIPAPSEECDDAYCPFHGTLPVRGQILVGTVVSSKMDNTVVIERQYMKMVSKYQRYEKRRSKIHAHNPACISAKVGDIVTIVECRPISKTKSFVVVKAEVPK.

It belongs to the universal ribosomal protein uS17 family. Part of the 30S ribosomal subunit.

Its function is as follows. One of the primary rRNA binding proteins, it binds specifically to the 5'-end of 16S ribosomal RNA. The protein is Small ribosomal subunit protein uS17 of Methanosarcina mazei (strain ATCC BAA-159 / DSM 3647 / Goe1 / Go1 / JCM 11833 / OCM 88) (Methanosarcina frisia).